Reading from the N-terminus, the 380-residue chain is MASLPNGAASASASAAGGGPAVVDKEVDFANYFCTYSYLYHQKEMLCDRVRMDAYHSAVFRNAHHFRGKVVLDVGTGSGILAIWSAQAGARKVYAVEATNMAEHARELARANDVADIVEVIQGSMEDVVLPEKVDVIISEWMGYFLLRESMFDSVICARDRWLKPDGVMYPSHARMWLAPIRSDLAENKMEDLEIAMHDWNLFVEDTESYYGVNMNVLTKAYRAEHEKYYLKSAIWNNLHPNQVIGQAAVIKEIDCLTATVDEIREVRAQVTMPIKLDMTRLAALAGWFDVHFRGSKQNPATQEVELSTAPDVNGGTHWGQQVFLLTPPLKVNEGDNVKVSFTMVRSKENHRLMDMEFTYELHESSGKQLPAITTKIYLE.

An SAM-dependent MTase PRMT-type domain is found at 26–357 (EVDFANYFCT…KENHRLMDME (332 aa)). Gln42, Arg51, Gly75, Glu97, and Glu126 together coordinate S-adenosyl-L-methionine. Residues Glu140 and Glu149 contribute to the active site. Residues 187 to 227 (ENKMEDLEIAMHDWNLFVEDTESYYGVNMNVLTKAYRAEHE) form a dimerization arm region.

This sequence belongs to the class I-like SAM-binding methyltransferase superfamily. Protein arginine N-methyltransferase family. In terms of assembly, ring-like homodimer.

It carries out the reaction L-arginyl-[protein] + 2 S-adenosyl-L-methionine = N(omega),N(omega)-dimethyl-L-arginyl-[protein] + 2 S-adenosyl-L-homocysteine + 2 H(+). Functionally, methylates (mono and asymmetric dimethylation) the guanidino nitrogens of arginyl residues in some proteins. The protein is Protein arginine N-methyltransferase PRMT10 (PRMT10) of Oryza sativa subsp. japonica (Rice).